The primary structure comprises 731 residues: Polyadenylate-binding protein, cytoplasmic and nuclear (731 aa).

Positions 1–10 (MSADVSTTPA) are enriched in polar residues. The disordered stretch occupies residues 1–51 (MSADVSTTPAAENVNGAAEASPAPAAAAPSATTPEVTAVENSTPAPAANQP). The span at 17–39 (AAEASPAPAAAAPSATTPEVTAV) shows a compositional bias: low complexity. RRM domains follow at residues 54–132 (ASLY…WSQR), 142–219 (GNVF…HHIS), 235–312 (TNVY…RAQK), and 338–472 (VNLY…LAQR). Disordered regions lie at residues 369–429 (VMRD…SDKK) and 603–665 (GGRG…NAQT). The span at 616–627 (GMRGGPGYGQGR) shows a compositional bias: gly residues. Positions 645 to 656 (QNAAAPAGPQEG) are enriched in low complexity. The PABC domain maps to 658–731 (AGGVNAQTLG…MRPLAFTMST (74 aa)).

It belongs to the polyadenylate-binding protein type-1 family.

The protein localises to the cytoplasm. It localises to the nucleus. Its function is as follows. Binds the poly(A) tail of mRNA. Appears to be an important mediator of the multiple roles of the poly(A) tail in mRNA biogenesis, stability and translation. In the nucleus, involved in both mRNA cleavage and polyadenylation. Is also required for efficient mRNA export to the cytoplasm. Acts in concert with a poly(A)-specific nuclease (PAN) to affect poly(A) tail shortening, which may occur concomitantly with either nucleocytoplasmic mRNA transport or translational initiation. In the cytoplasm, stimulates translation initiation and regulates mRNA decay through translation termination-coupled poly(A) shortening, probably mediated by PAN. The chain is Polyadenylate-binding protein, cytoplasmic and nuclear (pab1) from Aspergillus niger (strain ATCC MYA-4892 / CBS 513.88 / FGSC A1513).